The chain runs to 101 residues: NAD(P)H-quinone oxidoreductase subunit 4L, chloroplastic (101 aa).

3 helical membrane passes run methionine 2–isoleucine 22, methionine 32–phenylalanine 52, and isoleucine 61–valine 81.

The protein belongs to the complex I subunit 4L family. NDH is composed of at least 16 different subunits, 5 of which are encoded in the nucleus.

It is found in the plastid. The protein resides in the chloroplast thylakoid membrane. The catalysed reaction is a plastoquinone + NADH + (n+1) H(+)(in) = a plastoquinol + NAD(+) + n H(+)(out). The enzyme catalyses a plastoquinone + NADPH + (n+1) H(+)(in) = a plastoquinol + NADP(+) + n H(+)(out). Functionally, NDH shuttles electrons from NAD(P)H:plastoquinone, via FMN and iron-sulfur (Fe-S) centers, to quinones in the photosynthetic chain and possibly in a chloroplast respiratory chain. The immediate electron acceptor for the enzyme in this species is believed to be plastoquinone. Couples the redox reaction to proton translocation, and thus conserves the redox energy in a proton gradient. The protein is NAD(P)H-quinone oxidoreductase subunit 4L, chloroplastic of Manihot esculenta (Cassava).